A 146-amino-acid polypeptide reads, in one-letter code: Ribosome maturation factor RimP (146 aa).

It belongs to the RimP family.

It localises to the cytoplasm. Required for maturation of 30S ribosomal subunits. The sequence is that of Ribosome maturation factor RimP from Helicobacter pylori (strain G27).